The primary structure comprises 435 residues: Trigger factor (435 aa).

One can recognise a PPIase FKBP-type domain in the interval 163-248; that stretch reads GDTVTIDFDG…IHEIKTKELP (86 aa).

It belongs to the FKBP-type PPIase family. Tig subfamily.

It is found in the cytoplasm. The catalysed reaction is [protein]-peptidylproline (omega=180) = [protein]-peptidylproline (omega=0). Functionally, involved in protein export. Acts as a chaperone by maintaining the newly synthesized protein in an open conformation. Functions as a peptidyl-prolyl cis-trans isomerase. This Pediococcus pentosaceus (strain ATCC 25745 / CCUG 21536 / LMG 10740 / 183-1w) protein is Trigger factor.